Here is a 40-residue protein sequence, read N- to C-terminus: MGVLKRRVSSSRGLGGVLREQRAKLYIIKRCVVMLLCWQD.

Residues 9-40 are required for DVL/RTFL small polypeptide activity; it reads SSSRGLGGVLREQRAKLYIIKRCVVMLLCWQD. Residues 12–28 form a helical membrane-spanning segment; that stretch reads RGLGGVLREQRAKLYII.

It belongs to the DVL/RTFL small polypeptides family.

The protein localises to the cell membrane. In terms of biological role, small polypeptide acting as a regulatory molecule which coordinates cellular responses required for differentiation, growth and development, probably by restricting polar cell proliferation in lateral organs and coordinating socket cell recruitment and differentiation at trichome sites. This Arabidopsis thaliana (Mouse-ear cress) protein is Small polypeptide DEVIL 6.